The chain runs to 149 residues: Nucleoside diphosphate kinase (149 aa).

Residues lysine 11, phenylalanine 59, arginine 87, threonine 93, arginine 104, and asparagine 114 each coordinate ATP. Catalysis depends on histidine 117, which acts as the Pros-phosphohistidine intermediate.

Belongs to the NDK family. Homotetramer. The cofactor is Mg(2+).

It localises to the cytoplasm. The enzyme catalyses a 2'-deoxyribonucleoside 5'-diphosphate + ATP = a 2'-deoxyribonucleoside 5'-triphosphate + ADP. The catalysed reaction is a ribonucleoside 5'-diphosphate + ATP = a ribonucleoside 5'-triphosphate + ADP. Its function is as follows. Major role in the synthesis of nucleoside triphosphates other than ATP. The ATP gamma phosphate is transferred to the NDP beta phosphate via a ping-pong mechanism, using a phosphorylated active-site intermediate. This chain is Nucleoside diphosphate kinase, found in Treponema pallidum (strain Nichols).